The following is a 473-amino-acid chain: Photosystem II CP43 reaction center protein (473 aa).

Positions 1–14 (MKTLYSLRRYYPVE) are excised as a propeptide. At T15 the chain carries N-acetylthreonine. T15 is modified (phosphothreonine). 5 helical membrane passes run 69 to 93 (LFEVAHFVPEKPMYEQGLILLPHLA), 134 to 155 (LIGPETLEESFPFFGYVWKDKN), 178 to 200 (KASFFGGVYDTWAPGGGDVREIT), 255 to 275 (KPFAWARRALVWSGEAYLSYS), and 291 to 312 (WFNNTAYPSEFYGPTGPEASQA). E367 provides a ligand contact to [CaMn4O5] cluster. A helical transmembrane segment spans residues 447-471 (RARAAAAGFEKGIDRDSEPVLSMTP).

The protein belongs to the PsbB/PsbC family. PsbC subfamily. PSII is composed of 1 copy each of membrane proteins PsbA, PsbB, PsbC, PsbD, PsbE, PsbF, PsbH, PsbI, PsbJ, PsbK, PsbL, PsbM, PsbT, PsbX, PsbY, PsbZ, Psb30/Ycf12, at least 3 peripheral proteins of the oxygen-evolving complex and a large number of cofactors. It forms dimeric complexes. Requires Binds multiple chlorophylls and provides some of the ligands for the Ca-4Mn-5O cluster of the oxygen-evolving complex. It may also provide a ligand for a Cl- that is required for oxygen evolution. PSII binds additional chlorophylls, carotenoids and specific lipids. as cofactor.

The protein resides in the plastid. Its subcellular location is the chloroplast thylakoid membrane. One of the components of the core complex of photosystem II (PSII). It binds chlorophyll and helps catalyze the primary light-induced photochemical processes of PSII. PSII is a light-driven water:plastoquinone oxidoreductase, using light energy to abstract electrons from H(2)O, generating O(2) and a proton gradient subsequently used for ATP formation. The chain is Photosystem II CP43 reaction center protein from Anthoceros angustus (Hornwort).